The primary structure comprises 376 residues: Chaperone protein DnaJ (376 aa).

One can recognise a J domain in the interval D5 to G70. The segment at G132–S210 adopts a CR-type zinc-finger fold. Zn(2+) contacts are provided by C145, C148, C162, C165, C184, C187, C198, and C201. 4 CXXCXGXG motif repeats span residues C145–G152, C162–G169, C184–G191, and C198–G205.

It belongs to the DnaJ family. Homodimer. Zn(2+) is required as a cofactor.

The protein localises to the cytoplasm. In terms of biological role, participates actively in the response to hyperosmotic and heat shock by preventing the aggregation of stress-denatured proteins and by disaggregating proteins, also in an autonomous, DnaK-independent fashion. Unfolded proteins bind initially to DnaJ; upon interaction with the DnaJ-bound protein, DnaK hydrolyzes its bound ATP, resulting in the formation of a stable complex. GrpE releases ADP from DnaK; ATP binding to DnaK triggers the release of the substrate protein, thus completing the reaction cycle. Several rounds of ATP-dependent interactions between DnaJ, DnaK and GrpE are required for fully efficient folding. Also involved, together with DnaK and GrpE, in the DNA replication of plasmids through activation of initiation proteins. The polypeptide is Chaperone protein DnaJ (Shewanella halifaxensis (strain HAW-EB4)).